The following is a 338-amino-acid chain: Formimidoylglutamase (338 aa).

Mn(2+) contacts are provided by His137, Asp166, His168, Asp170, Cys259, and Asp261.

It belongs to the arginase family. Mn(2+) is required as a cofactor.

It carries out the reaction N-formimidoyl-L-glutamate + H2O = formamide + L-glutamate. Its pathway is amino-acid degradation; L-histidine degradation into L-glutamate; L-glutamate from N-formimidoyl-L-glutamate (hydrolase route): step 1/1. In terms of biological role, catalyzes the conversion of N-formimidoyl-L-glutamate to L-glutamate and formamide. The chain is Formimidoylglutamase from Clostridium tetani (strain Massachusetts / E88).